Reading from the N-terminus, the 508-residue chain is ATP synthase subunit alpha, chloroplastic (508 aa).

170–177 (GDRQTGKT) provides a ligand contact to ATP.

Belongs to the ATPase alpha/beta chains family. In terms of assembly, F-type ATPases have 2 components, CF(1) - the catalytic core - and CF(0) - the membrane proton channel. CF(1) has five subunits: alpha(3), beta(3), gamma(1), delta(1), epsilon(1). CF(0) has four main subunits: a, b, b' and c.

It is found in the plastid. It localises to the chloroplast thylakoid membrane. It carries out the reaction ATP + H2O + 4 H(+)(in) = ADP + phosphate + 5 H(+)(out). Its function is as follows. Produces ATP from ADP in the presence of a proton gradient across the membrane. The alpha chain is a regulatory subunit. The chain is ATP synthase subunit alpha, chloroplastic from Helianthus annuus (Common sunflower).